The primary structure comprises 480 residues: Probable glycosyltransferase 2 (480 aa).

A compositionally biased stretch (gly residues) spans 1-21 (MGQEGMGYNNGKGGGGGGGGL). A disordered region spans residues 1–45 (MGQEGMGYNNGKGGGGGGGGLPMTAPRPRGASPLSSHGHHHRSRK). Residues 1 to 49 (MGQEGMGYNNGKGGGGGGGGLPMTAPRPRGASPLSSHGHHHRSRKIHRT) lie on the Cytoplasmic side of the membrane. Residues 50 to 72 (FNNVKITVLCGLVTILVLRGTIG) traverse the membrane as a helical; Signal-anchor for type II membrane protein segment. Over 73–480 (LNLSLPNQPT…DVKAKISTTS (408 aa)) the chain is Lumenal. N-linked (GlcNAc...) asparagine glycans are attached at residues N74, N124, N129, and N458.

The protein belongs to the glycosyltransferase 34 family.

The protein localises to the golgi apparatus membrane. Functionally, probable glycosyltransferase that may be involved in the biosynthesis of xyloglucan. The chain is Probable glycosyltransferase 2 from Oryza sativa subsp. indica (Rice).